The following is a 242-amino-acid chain: uncharacterized protein (242 aa).

In terms of domain architecture, S4 RNA-binding spans 2–62 (EKAYKLLSVQ…VEKPSVIFED (61 aa)). Aspartate 93 is a catalytic residue.

It belongs to the pseudouridine synthase RluA family.

The enzyme catalyses a uridine in RNA = a pseudouridine in RNA. This is an uncharacterized protein from Helicobacter pylori (strain J99 / ATCC 700824) (Campylobacter pylori J99).